We begin with the raw amino-acid sequence, 929 residues long: MSPSRPAADERFDSARVAAEIATLAEKHTGNDAAFRTALAMLMKAELAKARTEAEAQLLRDRHGRRCAERLCYVQDAIIRLLFNAATEYLYNTPTPSSSERMTVVATGGYGRGLMAPESDIDLLFILPYKQTAWGEQVAEVILYCLWDIGLKVGHATRSVDECIRQARADMTIRTAILETRFLAGDEALYAELVERFDKEVVEGTAAEFVAAKLAEREERHRRSGQSRYLVEPNVKDGKGGLRDLHTLFWIAKYVYRVREASELSERGVFDPAEFRTFRRCEDFLWSVRCNIHFVTKRAEDRLSFDLQREIGVRLGYTSHPGMQDVERFMKHYFLIAKEVGNLTAILCAKLEDQQAKAAPALTRMMARLRPAAKRRRVPESDDFVIDNNRINLAVPDVFKHDPVNLIRIFRLAQKNNLAFHPDAMRSVTRSLSLITPQLRDNPEANRLFVEILTSDNAEPVLRRMNETGVLGRFIRAFGRIVSMMQFNMYHSYTVDEHLIRCVGNLQEIERGGNDEFALSSELIRKIRPDHRAVLYAAVLLHDIAKGQPEDHSTAGAKVARRLCPRFGFSTADTELVAWLIEKHLVMSTVAQSRDLSDRKTIENFAAVVETVEQMKMLTILTTADIRGVGPGVWNGWKAQLIRTLYYETEPVLTGGFSEVNRAERIRAAQAEFRAAFTEWPEADLNAYVARHYPAYWLKVDLQRKIRHARFLRASEQAGHKLAINVGFDEARAVTELTILAVDHPWLLSVIAGACASAGANIVDAQIYTTTDGRALDTISISREYDRDEDEGRRATRIGETIEEVLEGKLRLPEAVARRASSGSKAKLRAFVVEPEVEINNNWSDRYTVIEVSGLDRPGLLYQLTTAISKLNLNIASAHVATFGERARDVFYVTDLLGAQITAPTRQAAIKRALVHLLANGDAAEKPAA.

Residues 1–379 are uridylyltransferase; sequence MSPSRPAADE…RPAAKRRRVP (379 aa). The uridylyl-removing stretch occupies residues 380-735; it reads ESDDFVIDNN…VGFDEARAVT (356 aa). One can recognise an HD domain in the interval 495-618; it reads VDEHLIRCVG…VETVEQMKML (124 aa). 2 ACT domains span residues 736-818 and 849-929; these read ELTI…AVAR and VIEV…KPAA.

This sequence belongs to the GlnD family. It depends on Mg(2+) as a cofactor.

The enzyme catalyses [protein-PII]-L-tyrosine + UTP = [protein-PII]-uridylyl-L-tyrosine + diphosphate. It catalyses the reaction [protein-PII]-uridylyl-L-tyrosine + H2O = [protein-PII]-L-tyrosine + UMP + H(+). Its activity is regulated as follows. Uridylyltransferase (UTase) activity is inhibited by glutamine, while glutamine activates uridylyl-removing (UR) activity. Modifies, by uridylylation and deuridylylation, the PII regulatory proteins (GlnB and homologs), in response to the nitrogen status of the cell that GlnD senses through the glutamine level. Under low glutamine levels, catalyzes the conversion of the PII proteins and UTP to PII-UMP and PPi, while under higher glutamine levels, GlnD hydrolyzes PII-UMP to PII and UMP (deuridylylation). Thus, controls uridylylation state and activity of the PII proteins, and plays an important role in the regulation of nitrogen fixation and metabolism. This is Bifunctional uridylyltransferase/uridylyl-removing enzyme from Rhodopseudomonas palustris (strain ATCC BAA-98 / CGA009).